The following is a 572-amino-acid chain: Oxygen-dependent choline dehydrogenase (572 aa).

Residue 9-38 coordinates FAD; sequence DYVIIGGGSAGSVLGARLSEDKDKNVLVLE. Residue histidine 477 is the Proton acceptor of the active site.

The protein belongs to the GMC oxidoreductase family. It depends on FAD as a cofactor.

It catalyses the reaction choline + A = betaine aldehyde + AH2. The enzyme catalyses betaine aldehyde + NAD(+) + H2O = glycine betaine + NADH + 2 H(+). It participates in amine and polyamine biosynthesis; betaine biosynthesis via choline pathway; betaine aldehyde from choline (cytochrome c reductase route): step 1/1. Its function is as follows. Involved in the biosynthesis of the osmoprotectant glycine betaine. Catalyzes the oxidation of choline to betaine aldehyde and betaine aldehyde to glycine betaine at the same rate. The sequence is that of Oxygen-dependent choline dehydrogenase from Staphylococcus epidermidis (strain ATCC 35984 / DSM 28319 / BCRC 17069 / CCUG 31568 / BM 3577 / RP62A).